A 316-amino-acid polypeptide reads, in one-letter code: Pantothenate kinase (316 aa).

Residue 95-102 (GSVAVGKS) participates in ATP binding.

It belongs to the prokaryotic pantothenate kinase family.

Its subcellular location is the cytoplasm. The enzyme catalyses (R)-pantothenate + ATP = (R)-4'-phosphopantothenate + ADP + H(+). It participates in cofactor biosynthesis; coenzyme A biosynthesis; CoA from (R)-pantothenate: step 1/5. This Halalkalibacterium halodurans (strain ATCC BAA-125 / DSM 18197 / FERM 7344 / JCM 9153 / C-125) (Bacillus halodurans) protein is Pantothenate kinase (coaA).